The sequence spans 129 residues: uncharacterized protein (129 aa).

Positions 34–57 (SAPLRPPRELHAAPPPATPTQTVV) are disordered.

This is an uncharacterized protein from Homo sapiens (Human).